A 1378-amino-acid chain; its full sequence is Cell surface hyaluronidase (1378 aa).

Positions 1-77 are disordered; that stretch reads MQVNDGPSSH…GNRREQAQNQ (77 aa). Residues 1–82 are Cytoplasmic-facing; sequence MQVNDGPSSH…QAQNQQRKNT (82 aa). The segment covering 36-58 has biased composition (pro residues); it reads RSPPPAKAPPPPPLKPPVPPPAR. The helical; Signal-anchor for type II membrane protein transmembrane segment at 83–103 threads the bilayer; sequence YICVGIFFGIFLLILILVLSL. The Extracellular portion of the chain corresponds to 104-1378; sequence TSKDVLDENC…MDLELLKKIS (1275 aa). Residues 121-247 form the G8 domain; it reads RSWKPGHDLK…ERMSWTFLTR (127 aa). Asn-171, Asn-264, Asn-360, Asn-527, and Asn-639 each carry an N-linked (GlcNAc...) asparagine glycan. The GG-type lectin 1 domain maps to 257-414; it reads GDHAFQKNFS…YPTTGFQVDA (158 aa). One copy of the PbH1 1 repeat lies at 672-694; sequence HPNNHLISNSAAGSQDAGIWYVF. The N-linked (GlcNAc...) asparagine glycan is linked to Asn-696. One copy of the PbH1 2 repeat lies at 714 to 736; sequence TPLGTFFNNRVHSNFKAGLFIDR. N-linked (GlcNAc...) asparagine glycosylation is found at Asn-742, Asn-854, Asn-905, Asn-996, Asn-1069, Asn-1160, and Asn-1221. The region spanning 1203 to 1363 is the GG-type lectin 2 domain; that stretch reads NSYLQTQIKS…LEEYSCPPKK (161 aa).

This sequence belongs to the CEMIP family. Ca(2+) serves as cofactor.

The protein resides in the cell membrane. The enzyme catalyses Random hydrolysis of (1-&gt;4)-linkages between N-acetyl-beta-D-glucosamine and D-glucuronate residues in hyaluronate.. Its function is as follows. Cell surface hyaluronidase that mediates the initial cleavage of extracellular high-molecular-weight hyaluronan into intermediate-size hyaluronan. Acts as a regulator of angiogenesis in embryos by mediating degradation of extracellular hyaluronan, thereby promoting VEGF signaling. Acts as a regulator of heart development during myocardial and endocardial morphogenesis: involved in the looping stage of heart morphogenesis. Stimulates migration of endocardial cells and increases both myocardial and endocardial fusion. Involved in the restriction of endocardial cushions (ECs) formation to the atrioventricular canal (AVC). Also required for muscle fiber attachment. Is very specific to hyaluronan; not able to cleave chondroitin sulfate or dermatan sulfate. The chain is Cell surface hyaluronidase (cemip2) from Danio rerio (Zebrafish).